The sequence spans 557 residues: Dihydroxy-acid dehydratase (557 aa).

Residue Cys-50 coordinates [2Fe-2S] cluster. Position 82 (Asp-82) interacts with Mg(2+). Cys-123 is a binding site for [2Fe-2S] cluster. Mg(2+) contacts are provided by Asp-124 and Lys-125. Position 125 is an N6-carboxylysine (Lys-125). [2Fe-2S] cluster is bound at residue Cys-195. Glu-447 provides a ligand contact to Mg(2+). Catalysis depends on Ser-473, which acts as the Proton acceptor.

This sequence belongs to the IlvD/Edd family. In terms of assembly, homodimer. Requires [2Fe-2S] cluster as cofactor. It depends on Mg(2+) as a cofactor.

The catalysed reaction is (2R)-2,3-dihydroxy-3-methylbutanoate = 3-methyl-2-oxobutanoate + H2O. It catalyses the reaction (2R,3R)-2,3-dihydroxy-3-methylpentanoate = (S)-3-methyl-2-oxopentanoate + H2O. Its pathway is amino-acid biosynthesis; L-isoleucine biosynthesis; L-isoleucine from 2-oxobutanoate: step 3/4. It functions in the pathway amino-acid biosynthesis; L-valine biosynthesis; L-valine from pyruvate: step 3/4. Its function is as follows. Functions in the biosynthesis of branched-chain amino acids. Catalyzes the dehydration of (2R,3R)-2,3-dihydroxy-3-methylpentanoate (2,3-dihydroxy-3-methylvalerate) into 2-oxo-3-methylpentanoate (2-oxo-3-methylvalerate) and of (2R)-2,3-dihydroxy-3-methylbutanoate (2,3-dihydroxyisovalerate) into 2-oxo-3-methylbutanoate (2-oxoisovalerate), the penultimate precursor to L-isoleucine and L-valine, respectively. This chain is Dihydroxy-acid dehydratase, found in Burkholderia pseudomallei (strain 1710b).